Here is a 344-residue protein sequence, read N- to C-terminus: Dihydroorotate dehydrogenase (quinone) (344 aa).

FMN-binding positions include 61-65 (AGLDK) and Thr-85. Lys-65 provides a ligand contact to substrate. 110-114 (NRMGF) contributes to the substrate binding site. The FMN site is built by Asn-138 and Asn-171. Position 171 (Asn-171) interacts with substrate. The active-site Nucleophile is Ser-174. Position 176 (Asn-176) interacts with substrate. FMN is bound by residues Lys-216 and Thr-244. Residue 245-246 (NT) participates in substrate binding. FMN is bound by residues Gly-267, Gly-296, and 317–318 (YS).

The protein belongs to the dihydroorotate dehydrogenase family. Type 2 subfamily. Monomer. FMN serves as cofactor.

The protein resides in the cell membrane. The catalysed reaction is (S)-dihydroorotate + a quinone = orotate + a quinol. It functions in the pathway pyrimidine metabolism; UMP biosynthesis via de novo pathway; orotate from (S)-dihydroorotate (quinone route): step 1/1. Catalyzes the conversion of dihydroorotate to orotate with quinone as electron acceptor. The protein is Dihydroorotate dehydrogenase (quinone) of Psychrobacter sp. (strain PRwf-1).